We begin with the raw amino-acid sequence, 165 residues long: Transcription factor zip-10 (165 aa).

Over residues 53 to 71 (ASLGTSTTSSSRCSSTESS) the composition is skewed to low complexity. A disordered region spans residues 53 to 99 (ASLGTSTTSSSRCSSTESSAAPGKIRRGRPQQEIADGQDAHSQKKRH). A coiled-coil region spans residues 104–150 (ARQYRAQMRQKVENVKSLHDEKEQLELEVKALRQAVSGLQQENAQKD).

It localises to the nucleus. Transcription factor that regulates the expression of genes in response to changes in temperature. In particular, binds to the promoter region of genes such as asp-17 in response to severe cold to warm temperature transitions to promote gene expression. Promotes stress-induced death, particularly in older animals, following cold shock followed by warming and this may have evolved as a form of kin survival under thermal stress conditions, favoring the survival of younger animals. This Caenorhabditis elegans protein is Transcription factor zip-10.